A 166-amino-acid polypeptide reads, in one-letter code: NAD(P)H-quinone oxidoreductase subunit I, chloroplastic (166 aa).

2 consecutive 4Fe-4S ferredoxin-type domains span residues glycine 55–lysine 84 and leucine 95–glutamate 124. The [4Fe-4S] cluster site is built by cysteine 64, cysteine 67, cysteine 70, cysteine 74, cysteine 104, cysteine 107, cysteine 110, and cysteine 114.

Belongs to the complex I 23 kDa subunit family. In terms of assembly, NDH is composed of at least 16 different subunits, 5 of which are encoded in the nucleus. Requires [4Fe-4S] cluster as cofactor.

The protein localises to the plastid. The protein resides in the chloroplast thylakoid membrane. It carries out the reaction a plastoquinone + NADH + (n+1) H(+)(in) = a plastoquinol + NAD(+) + n H(+)(out). The catalysed reaction is a plastoquinone + NADPH + (n+1) H(+)(in) = a plastoquinol + NADP(+) + n H(+)(out). NDH shuttles electrons from NAD(P)H:plastoquinone, via FMN and iron-sulfur (Fe-S) centers, to quinones in the photosynthetic chain and possibly in a chloroplast respiratory chain. The immediate electron acceptor for the enzyme in this species is believed to be plastoquinone. Couples the redox reaction to proton translocation, and thus conserves the redox energy in a proton gradient. The sequence is that of NAD(P)H-quinone oxidoreductase subunit I, chloroplastic from Marshallia caespitosa (Barbara's buttons).